Reading from the N-terminus, the 348-residue chain is tRNA N6-adenosine threonylcarbamoyltransferase (348 aa).

Residues histidine 116 and histidine 120 each coordinate Fe cation. Substrate is bound by residues 138–142 (IISGG), aspartate 171, glycine 184, and asparagine 282. Position 310 (aspartate 310) interacts with Fe cation.

It belongs to the KAE1 / TsaD family. Requires Fe(2+) as cofactor.

The protein resides in the cytoplasm. It carries out the reaction L-threonylcarbamoyladenylate + adenosine(37) in tRNA = N(6)-L-threonylcarbamoyladenosine(37) in tRNA + AMP + H(+). In terms of biological role, required for the formation of a threonylcarbamoyl group on adenosine at position 37 (t(6)A37) in tRNAs that read codons beginning with adenine. Is involved in the transfer of the threonylcarbamoyl moiety of threonylcarbamoyl-AMP (TC-AMP) to the N6 group of A37, together with TsaE and TsaB. TsaD likely plays a direct catalytic role in this reaction. In Ehrlichia ruminantium (strain Gardel), this protein is tRNA N6-adenosine threonylcarbamoyltransferase.